Here is a 329-residue protein sequence, read N- to C-terminus: Glyceraldehyde-3-phosphate dehydrogenase 1 (329 aa).

NAD(+) contacts are provided by residues 11–12 (RI), Asp-33, and Lys-78. D-glyceraldehyde 3-phosphate-binding positions include 148 to 150 (SCT), Thr-179, 208 to 209 (TG), and Arg-231. Catalysis depends on Cys-149, which acts as the Nucleophile. Position 313 (Asn-313) interacts with NAD(+).

This sequence belongs to the glyceraldehyde-3-phosphate dehydrogenase family. In terms of assembly, homotetramer.

The protein localises to the cytoplasm. It carries out the reaction D-glyceraldehyde 3-phosphate + phosphate + NAD(+) = (2R)-3-phospho-glyceroyl phosphate + NADH + H(+). It participates in carbohydrate degradation; glycolysis; pyruvate from D-glyceraldehyde 3-phosphate: step 1/5. The protein is Glyceraldehyde-3-phosphate dehydrogenase 1 (GAP1) of Kluyveromyces lactis (strain ATCC 8585 / CBS 2359 / DSM 70799 / NBRC 1267 / NRRL Y-1140 / WM37) (Yeast).